The sequence spans 76 residues: Small ribosomal subunit protein bS18 (76 aa).

It belongs to the bacterial ribosomal protein bS18 family. In terms of assembly, part of the 30S ribosomal subunit. Forms a tight heterodimer with protein bS6.

Binds as a heterodimer with protein bS6 to the central domain of the 16S rRNA, where it helps stabilize the platform of the 30S subunit. This Xylella fastidiosa (strain M23) protein is Small ribosomal subunit protein bS18.